The primary structure comprises 201 residues: Imidazoleglycerol-phosphate dehydratase (201 aa).

This sequence belongs to the imidazoleglycerol-phosphate dehydratase family.

It localises to the cytoplasm. It carries out the reaction D-erythro-1-(imidazol-4-yl)glycerol 3-phosphate = 3-(imidazol-4-yl)-2-oxopropyl phosphate + H2O. Its pathway is amino-acid biosynthesis; L-histidine biosynthesis; L-histidine from 5-phospho-alpha-D-ribose 1-diphosphate: step 6/9. This Prochlorococcus marinus (strain MIT 9301) protein is Imidazoleglycerol-phosphate dehydratase.